A 313-amino-acid polypeptide reads, in one-letter code: Ribosomal RNA small subunit methyltransferase H (313 aa).

Residues 35–37, Asp55, Phe81, Asp103, and Gln110 each bind S-adenosyl-L-methionine; that span reads GGH.

It belongs to the methyltransferase superfamily. RsmH family.

The protein localises to the cytoplasm. It carries out the reaction cytidine(1402) in 16S rRNA + S-adenosyl-L-methionine = N(4)-methylcytidine(1402) in 16S rRNA + S-adenosyl-L-homocysteine + H(+). Specifically methylates the N4 position of cytidine in position 1402 (C1402) of 16S rRNA. The polypeptide is Ribosomal RNA small subunit methyltransferase H (Pseudomonas aeruginosa (strain LESB58)).